The following is a 241-amino-acid chain: Eukaryotic translation initiation factor 3 subunit J (241 aa).

A compositionally biased stretch (basic and acidic residues) spans 1 to 27; the sequence is MEEDWEQHGEKEEVPLPAKKPDANKWD. The tract at residues 1 to 99 is disordered; sequence MEEDWEQHGE…ENMTPEQKLA (99 aa). Acidic residues predominate over residues 28-45; the sequence is GEDEEEEVKDSWEDEDEL. A coiled-coil region spans residues 31–119; it reads EEEEVKDSWE…ESDLKNALDT (89 aa). Basic and acidic residues-rich tracts occupy residues 46-58 and 69-90; these read EEKKDEEKVETPK and IVEKEKQKHEEAERRRLEKEAE.

The protein belongs to the eIF-3 subunit J family. Component of the eukaryotic translation initiation factor 3 (eIF-3) complex.

It localises to the cytoplasm. Component of the eukaryotic translation initiation factor 3 (eIF-3) complex, which is involved in protein synthesis of a specialized repertoire of mRNAs and, together with other initiation factors, stimulates binding of mRNA and methionyl-tRNAi to the 40S ribosome. The eIF-3 complex specifically targets and initiates translation of a subset of mRNAs involved in cell proliferation. This Culex quinquefasciatus (Southern house mosquito) protein is Eukaryotic translation initiation factor 3 subunit J.